The chain runs to 101 residues: Urease subunit beta (101 aa).

It belongs to the urease beta subunit family. Heterotrimer of UreA (gamma), UreB (beta) and UreC (alpha) subunits. Three heterotrimers associate to form the active enzyme.

The protein resides in the cytoplasm. It catalyses the reaction urea + 2 H2O + H(+) = hydrogencarbonate + 2 NH4(+). It functions in the pathway nitrogen metabolism; urea degradation; CO(2) and NH(3) from urea (urease route): step 1/1. This chain is Urease subunit beta, found in Ralstonia pickettii (strain 12J).